The chain runs to 335 residues: Methionine aminopeptidase 1D, mitochondrial (335 aa).

Residues 1–19 (MAAPIGVPLLVRGGCQRIL) constitute a mitochondrion transit peptide. Residue His161 coordinates substrate. Residues Asp178, Asp189, and His252 each contribute to the a divalent metal cation site. His259 contributes to the substrate binding site. The a divalent metal cation site is built by Glu284 and Glu315.

This sequence belongs to the peptidase M24A family. Methionine aminopeptidase type 1 subfamily. Co(2+) serves as cofactor. Requires Zn(2+) as cofactor. The cofactor is Mn(2+). It depends on Fe(2+) as a cofactor.

The protein resides in the mitochondrion. The enzyme catalyses Release of N-terminal amino acids, preferentially methionine, from peptides and arylamides.. Functionally, removes the N-terminal methionine from nascent proteins. The N-terminal methionine is often cleaved when the second residue in the primary sequence is small and uncharged (Met-Ala-, Cys, Gly, Pro, Ser, Thr, or Val). Requires deformylation of the N(alpha)-formylated initiator methionine before it can be hydrolyzed. The protein is Methionine aminopeptidase 1D, mitochondrial (Metap1d) of Mus musculus (Mouse).